The chain runs to 335 residues: Cytoplasmic envelopment protein 2 (335 aa).

Belongs to the herpesviridae cytoplasmic envelopment protein 2 family. In terms of assembly, interacts with cytoplasmic envelopment protein 3 and with the capsid.

It is found in the virion tegument. The protein resides in the host cytoplasm. The protein localises to the host nucleus. Its function is as follows. Plays a critical role in cytoplasmic virus egress. Participates in the final step of tegumentation and envelope acquisition within the host cytoplasm by directly interacting with the capsid. Upon virion binding to target cell, a signaling cascade is triggered to disrupt the interaction with the capsid, thereby preparing capsid uncoating. The sequence is that of Cytoplasmic envelopment protein 2 (U65) from Human herpesvirus 6B (strain Z29) (HHV-6 variant B).